A 145-amino-acid polypeptide reads, in one-letter code: MNLVQLGKLHENVLDAGCEPNRNARYLASLGYKVVGIDISERAISKAIDKTSSEKSNVNFNQRDFSRLNEFKGHFDTVIDIGCFHSILNSDHEPHTASLSHICHSDSSVFLRAFSETNKSRYRRWQGHKRYSLALKRNNVKKLSL.

It belongs to the methyltransferase superfamily.

Functionally, probable methyltransferase. This is an uncharacterized protein from Schizosaccharomyces pombe (strain 972 / ATCC 24843) (Fission yeast).